Here is a 672-residue protein sequence, read N- to C-terminus: DNA ligase (672 aa).

NAD(+) is bound by residues 34-38 (DAEYD), 83-84 (SL), and E117. The active-site N6-AMP-lysine intermediate is K119. Residues R140, E177, K293, and K317 each coordinate NAD(+). Residues C411, C414, C429, and C434 each contribute to the Zn(2+) site. One can recognise a BRCT domain in the interval 591–672 (RVGGRFTGKT…FLAMLGVCRT (82 aa)).

It belongs to the NAD-dependent DNA ligase family. LigA subfamily. Mg(2+) is required as a cofactor. Mn(2+) serves as cofactor.

It carries out the reaction NAD(+) + (deoxyribonucleotide)n-3'-hydroxyl + 5'-phospho-(deoxyribonucleotide)m = (deoxyribonucleotide)n+m + AMP + beta-nicotinamide D-nucleotide.. Its function is as follows. DNA ligase that catalyzes the formation of phosphodiester linkages between 5'-phosphoryl and 3'-hydroxyl groups in double-stranded DNA using NAD as a coenzyme and as the energy source for the reaction. It is essential for DNA replication and repair of damaged DNA. The chain is DNA ligase from Geotalea uraniireducens (strain Rf4) (Geobacter uraniireducens).